The following is a 250-amino-acid chain: 3-deoxy-manno-octulosonate cytidylyltransferase (250 aa).

Belongs to the KdsB family.

The protein resides in the cytoplasm. The enzyme catalyses 3-deoxy-alpha-D-manno-oct-2-ulosonate + CTP = CMP-3-deoxy-beta-D-manno-octulosonate + diphosphate. It functions in the pathway nucleotide-sugar biosynthesis; CMP-3-deoxy-D-manno-octulosonate biosynthesis; CMP-3-deoxy-D-manno-octulosonate from 3-deoxy-D-manno-octulosonate and CTP: step 1/1. It participates in bacterial outer membrane biogenesis; lipopolysaccharide biosynthesis. In terms of biological role, activates KDO (a required 8-carbon sugar) for incorporation into bacterial lipopolysaccharide in Gram-negative bacteria. The polypeptide is 3-deoxy-manno-octulosonate cytidylyltransferase (Thioalkalivibrio sulfidiphilus (strain HL-EbGR7)).